A 446-amino-acid polypeptide reads, in one-letter code: Putative ZDHHC-type palmitoyltransferase 2 (446 aa).

Disordered stretches follow at residues M1 to N33 and Q56 to P83. N5, N8, N14, and N21 each carry an N-linked (GlcNAc...) asparagine glycan. The segment covering Q56 to N81 has biased composition (low complexity). N-linked (GlcNAc...) asparagine glycans are attached at residues N141, N145, N159, and N165. 5 consecutive transmembrane segments (helical) span residues I178–W198, I210–S230, Y305–I325, L349–L369, and I410–I430. The 51-residue stretch at K261–F311 folds into the DHHC domain.

This sequence belongs to the DHHC palmitoyltransferase family.

Its subcellular location is the membrane. The catalysed reaction is L-cysteinyl-[protein] + hexadecanoyl-CoA = S-hexadecanoyl-L-cysteinyl-[protein] + CoA. The chain is Putative ZDHHC-type palmitoyltransferase 2 from Dictyostelium discoideum (Social amoeba).